We begin with the raw amino-acid sequence, 375 residues long: CCA-adding enzyme (375 aa).

Positions 8 and 11 each coordinate ATP. Residues G8 and R11 each coordinate CTP. Mg(2+)-binding residues include D21 and D23. ATP-binding residues include R91, R137, and R140. Residues R91, R137, and R140 each coordinate CTP.

The protein belongs to the tRNA nucleotidyltransferase/poly(A) polymerase family. Bacterial CCA-adding enzyme type 2 subfamily. Requires Mg(2+) as cofactor.

It catalyses the reaction a tRNA precursor + 2 CTP + ATP = a tRNA with a 3' CCA end + 3 diphosphate. It carries out the reaction a tRNA with a 3' CCA end + 2 CTP + ATP = a tRNA with a 3' CCACCA end + 3 diphosphate. Functionally, catalyzes the addition and repair of the essential 3'-terminal CCA sequence in tRNAs without using a nucleic acid template. Adds these three nucleotides in the order of C, C, and A to the tRNA nucleotide-73, using CTP and ATP as substrates and producing inorganic pyrophosphate. tRNA 3'-terminal CCA addition is required both for tRNA processing and repair. Also involved in tRNA surveillance by mediating tandem CCA addition to generate a CCACCA at the 3' terminus of unstable tRNAs. While stable tRNAs receive only 3'-terminal CCA, unstable tRNAs are marked with CCACCA and rapidly degraded. The sequence is that of CCA-adding enzyme from Pseudomonas entomophila (strain L48).